Here is a 430-residue protein sequence, read N- to C-terminus: MVTTLRQTDPDFEQKFAAFLSGKREVSEDVDRAVREIVDRVRREGDSALLDYSRRFDRIDLEKTGIAVTEAEIDAAFDAAPASTVEALKLARDRIEKHHARQLPKDDRYTDALGVELGSRWTAIKAVGLYVPGGTASYPSSVLMNAMPAKVAGVDRIVMVVPAPDGNLNPLVLVAARLAGVSEIYRVGGAQAIAALAYGTETIRPVAKIVGPGNAYVAAAKRIVFGTVGIDMIAGPSEVLIVADKDNNPDWIAADLLAQAEHDTAAQSILMTNDEAFAHAVEEAVERQLHTLARTETASASWRDFGAVILVKDFEDAIPLANRIAAEHLEIAVADAEAFVPRIRNAGSIFIGGYTPEVIGDYVGGCNHVLPTARSARFSSGLSVLDYMKRTSLLKLGSEQLRALGPAAIEIARAEGLDAHAQSVAIRLNL.

Y130, Q191, and N214 together coordinate NAD(+). Positions 237, 259, and 262 each coordinate substrate. Zn(2+) is bound by residues Q259 and H262. Catalysis depends on proton acceptor residues E327 and H328. Residues H328, D361, E415, and H420 each contribute to the substrate site. D361 serves as a coordination point for Zn(2+). H420 is a binding site for Zn(2+).

Belongs to the histidinol dehydrogenase family. Requires Zn(2+) as cofactor.

It catalyses the reaction L-histidinol + 2 NAD(+) + H2O = L-histidine + 2 NADH + 3 H(+). The protein operates within amino-acid biosynthesis; L-histidine biosynthesis; L-histidine from 5-phospho-alpha-D-ribose 1-diphosphate: step 9/9. Its function is as follows. Catalyzes the sequential NAD-dependent oxidations of L-histidinol to L-histidinaldehyde and then to L-histidine. The protein is Histidinol dehydrogenase of Brucella melitensis biotype 1 (strain ATCC 23456 / CCUG 17765 / NCTC 10094 / 16M).